Here is a 120-residue protein sequence, read N- to C-terminus: Large ribosomal subunit protein uL14 (120 aa).

Belongs to the universal ribosomal protein uL14 family. In terms of assembly, part of the 50S ribosomal subunit. Forms a cluster with proteins L3 and L19. In the 70S ribosome, L14 and L19 interact and together make contacts with the 16S rRNA in bridges B5 and B8.

Its function is as follows. Binds to 23S rRNA. Forms part of two intersubunit bridges in the 70S ribosome. The sequence is that of Large ribosomal subunit protein uL14 from Karelsulcia muelleri (strain GWSS) (Sulcia muelleri).